A 582-amino-acid chain; its full sequence is Formate--tetrahydrofolate ligase (582 aa).

An ATP-binding site is contributed by 65-72 (TPLGEGKT).

The protein belongs to the formate--tetrahydrofolate ligase family.

It catalyses the reaction (6S)-5,6,7,8-tetrahydrofolate + formate + ATP = (6R)-10-formyltetrahydrofolate + ADP + phosphate. It participates in one-carbon metabolism; tetrahydrofolate interconversion. The chain is Formate--tetrahydrofolate ligase from Vibrio campbellii (strain ATCC BAA-1116).